Reading from the N-terminus, the 1322-residue chain is C-Jun-amino-terminal kinase-interacting protein 3 (1322 aa).

The 89-residue stretch at 12–100 (VVVYQDDYCS…LTQYEREKAL (89 aa)) folds into the RH1 domain. Residues 50–80 (EVVKELMPLVVNVLENLDSVLSENQEHEVEL) are kinesin-binding domain (KBD); essential for its function in axon elongation. Residues 66–167 (LDSVLSENQE…KKEYNALHQR (102 aa)) are a coiled coil. 2 disordered regions span residues 183 to 211 (KMQQVGGGGQTESSLPGRSRKERPTSLNV) and 245 to 317 (SSSY…NSRN). Residues 210–226 (NVFPLADGMVRAQMGGK) form a JNK-binding domain (JBD); essential for its function in axon elongation region. Positions 261–270 (SSAAATPSTT) are enriched in low complexity. Phosphothreonine is present on residues Thr266, Thr276, and Thr287. Residues 271–282 (GTKSNTPTSSVP) are compositionally biased toward polar residues. The segment covering 305-315 (NNKRAREKRNS) has biased composition (basic residues). A phosphoserine mark is found at Ser315, Ser365, and Ser366. The tract at residues 424–459 (QLLETKNALNVVKNDLIAKVDQLSGEQEVLKGELEA) is leucine zipper-like domain (LZ); essential for its function in axon elongation. Residues 443 to 534 (VDQLSGEQEV…KERLMELQEA (92 aa)) adopt a coiled-coil conformation. An interaction with NTRK2 region spans residues 459–515 (AAKQAKVKLENRIKELEEELKRVKSEAVTARREPREEVEDDKIPMAQRRRFTRVEMA). Positions 506 to 580 (RRRFTRVEMA…SPPPAKRSYP (75 aa)) constitute an RH2 domain. Residues Ser588 and Ser662 each carry the phosphoserine modification. 3 disordered regions span residues 704 to 754 (WKPN…EADA), 844 to 952 (PRSN…TTSS), and 1281 to 1307 (RIGDGEDDETEEGTGDVNQTKPSLSKA). Residues 724–750 (LTCDREGEGEPKSTHPSPEKKKAKEVP) show a composition bias toward basic and acidic residues. Polar residues predominate over residues 914-937 (APTQSSSTQPASENGSESDGSIVQ). Residues 941-952 (EPSGESSATTSS) are compositionally biased toward low complexity. The segment covering 1285–1294 (GEDDETEEGT) has biased composition (acidic residues).

It belongs to the JIP scaffold family. As to quaternary structure, forms homo- or heterooligomeric complexes. The central region of MAPK8IP3 interacts with the C-terminal of MAPK8IP2 but not MAPK8IP1. Binds specific components of the JNK signaling pathway namely MAPK8/JNK1, MAPK9/JNK2 and MAPK10/JNK3 to the N-terminal region, MAP2K4/MKK4 and MAP2K7/MKK7 to the central region and MAP3K11 to the C-terminal region. Binds the TPR motif-containing C-terminal of kinesin light chain, KLC1. Pre-assembled MAPK8IP1 scaffolding complexes are then transported as a cargo of kinesin, to the required subcellular location. Interacts with ROCK1 and this interaction is enhanced by ultraviolet-B (UVB) radiation. Interacts with SH3RF2. Interacts with NTRK3/TRKC. Interacts with NTRK2/TRKB. Post-translationally, phosphorylation by ROCK1 is crucial for the recruitment of JNK.

The protein resides in the cytoplasm. It is found in the golgi apparatus. Its subcellular location is the cytoplasmic vesicle. It localises to the cell projection. The protein localises to the growth cone. The protein resides in the axon. It is found in the dendrite. Its subcellular location is the perinuclear region. Functionally, the JNK-interacting protein (JIP) group of scaffold proteins selectively mediates JNK signaling by aggregating specific components of the MAPK cascade to form a functional JNK signaling module. May function as a regulator of vesicle transport, through interactions with the JNK-signaling components and motor proteins. Promotes neuronal axon elongation in a kinesin- and JNK-dependent manner. Activates cofilin at axon tips via local activation of JNK, thereby regulating filopodial dynamics and enhancing axon elongation. Its binding to kinesin heavy chains (KHC), promotes kinesin-1 motility along microtubules and is essential for axon elongation and regeneration. Regulates cortical neuronal migration by mediating NTRK2/TRKB anterograde axonal transport during brain development. Acts as an adapter that bridges the interaction between NTRK2/TRKB and KLC1 and drives NTRK2/TRKB axonal but not dendritic anterograde transport, which is essential for subsequent BDNF-triggered signaling and filopodia formation. The protein is C-Jun-amino-terminal kinase-interacting protein 3 (Mapk8ip3) of Rattus norvegicus (Rat).